Reading from the N-terminus, the 110-residue chain is Large ribosomal subunit protein uL22 (110 aa).

It belongs to the universal ribosomal protein uL22 family. As to quaternary structure, part of the 50S ribosomal subunit.

Functionally, this protein binds specifically to 23S rRNA; its binding is stimulated by other ribosomal proteins, e.g. L4, L17, and L20. It is important during the early stages of 50S assembly. It makes multiple contacts with different domains of the 23S rRNA in the assembled 50S subunit and ribosome. Its function is as follows. The globular domain of the protein is located near the polypeptide exit tunnel on the outside of the subunit, while an extended beta-hairpin is found that lines the wall of the exit tunnel in the center of the 70S ribosome. The protein is Large ribosomal subunit protein uL22 of Variovorax paradoxus (strain S110).